The primary structure comprises 336 residues: Probable allantoicase (336 aa).

It belongs to the allantoicase family.

The enzyme catalyses allantoate + H2O = (S)-ureidoglycolate + urea. It functions in the pathway nitrogen metabolism; (S)-allantoin degradation; (S)-ureidoglycolate from allantoate (aminidohydrolase route): step 1/1. The sequence is that of Probable allantoicase from Acinetobacter baumannii (strain AYE).